A 394-amino-acid chain; its full sequence is Dual-specificity RNA methyltransferase RlmN (394 aa).

Glutamate 115 serves as the catalytic Proton acceptor. The Radical SAM core domain occupies 121-363; the sequence is DEGRGTLCVS…SPIRTPRGED (243 aa). A disulfide bridge links cysteine 128 with cysteine 368. 3 residues coordinate [4Fe-4S] cluster: cysteine 135, cysteine 139, and cysteine 142. S-adenosyl-L-methionine is bound by residues 194-195, serine 226, 248-250, and asparagine 325; these read GE and SFH. The S-methylcysteine intermediate role is filled by cysteine 368.

The protein belongs to the radical SAM superfamily. RlmN family. Requires [4Fe-4S] cluster as cofactor.

The protein localises to the cytoplasm. It carries out the reaction adenosine(2503) in 23S rRNA + 2 reduced [2Fe-2S]-[ferredoxin] + 2 S-adenosyl-L-methionine = 2-methyladenosine(2503) in 23S rRNA + 5'-deoxyadenosine + L-methionine + 2 oxidized [2Fe-2S]-[ferredoxin] + S-adenosyl-L-homocysteine. The catalysed reaction is adenosine(37) in tRNA + 2 reduced [2Fe-2S]-[ferredoxin] + 2 S-adenosyl-L-methionine = 2-methyladenosine(37) in tRNA + 5'-deoxyadenosine + L-methionine + 2 oxidized [2Fe-2S]-[ferredoxin] + S-adenosyl-L-homocysteine. Its function is as follows. Specifically methylates position 2 of adenine 2503 in 23S rRNA and position 2 of adenine 37 in tRNAs. m2A2503 modification seems to play a crucial role in the proofreading step occurring at the peptidyl transferase center and thus would serve to optimize ribosomal fidelity. This is Dual-specificity RNA methyltransferase RlmN from Roseobacter denitrificans (strain ATCC 33942 / OCh 114) (Erythrobacter sp. (strain OCh 114)).